Consider the following 378-residue polypeptide: Rhodopsin (378 aa).

At 1 to 53 (MMSIASGPSHAAYTWTAQGGGFGNQTVVDKVPPEMLHLVDAHWYQFPPMNPLW) the chain is on the extracellular side. N-linked (GlcNAc...) asparagine glycosylation is present at N24. The chain crosses the membrane as a helical span at residues 54–78 (HAILGFVIGILGMISVIGNGMVIYI). The Cytoplasmic segment spans residues 79–90 (FTTTKSLRTPSN). Residues 91-115 (LLVINLAISDFLMMLSMSPAMVINC) traverse the membrane as a helical segment. Over 116-130 (YYETWVLGPLVCELY) the chain is Extracellular. A disulfide bond links C127 and C204. Residues 131–150 (GLTGSLFGCGSIWTMTMIAF) traverse the membrane as a helical segment. Residues 151-169 (DRYNVIVKGLSAKPMTING) are Cytoplasmic-facing. The helical transmembrane segment at 170–193 (ALLRILGIWFFSLGWTIAPMFGWN) threads the bilayer. Residues 194–217 (RYVPEGNMTACGTDYLTKDLLSRS) lie on the Extracellular side of the membrane. N200 is a glycosylation site (N-linked (GlcNAc...) asparagine). A helical transmembrane segment spans residues 218–245 (YILVYSFFCYFLPLFLIIYSYFFIIQAV). Residues 246–280 (AAHEKNMREQAKKMNVASLRSAENQSTSAECKLAK) lie on the Cytoplasmic side of the membrane. Residues 281-304 (VALMTISLWFMAWTPYLVINYAGI) form a helical membrane-spanning segment. Over 305–311 (FETVKIN) the chain is Extracellular. A helical transmembrane segment spans residues 312 to 336 (PLFTIWGSLFAKANAVYNPIVYGIS). The residue at position 323 (K323) is an N6-(retinylidene)lysine. At 337 to 378 (HPKYRAALFQRFPSLACSSGPAGADTLSTTTTVTEGTEKPAA) the chain is on the cytoplasmic side. The interval 356 to 378 (GPAGADTLSTTTTVTEGTEKPAA) is disordered. The span at 362–371 (TLSTTTTVTE) shows a compositional bias: low complexity.

It belongs to the G-protein coupled receptor 1 family. Opsin subfamily. In terms of processing, phosphorylated on some or all of the serine and threonine residues present in the C-terminal region.

The protein localises to the membrane. Its function is as follows. Visual pigments are the light-absorbing molecules that mediate vision. They consist of an apoprotein, opsin, covalently linked to cis-retinal. The polypeptide is Rhodopsin (Cataglyphis bombycina (Saharan silver ant)).